Here is a 437-residue protein sequence, read N- to C-terminus: Lipopolysaccharide biosynthesis protein RfbH (437 aa).

The protein belongs to the DegT/DnrJ/EryC1 family. Pyridoxal 5'-phosphate is required as a cofactor.

It participates in bacterial outer membrane biogenesis; LPS O-antigen biosynthesis. In Salmonella typhimurium (strain LT2 / SGSC1412 / ATCC 700720), this protein is Lipopolysaccharide biosynthesis protein RfbH (rfbH).